The primary structure comprises 412 residues: MPSSISWGLLLLAGLCCLAPGSLAGDAQETDASKDDHEHPACHKIAPNLAEFAFDLYRVLARQSNTTNIFFSPVSVATALAALSLGTKGDTHTQILEGLDFNLTEMAETDIHQGFQHLLQTLNRPNNQLQLTTGNGLFIDQSLKLADKFLEDVKNLYHSEAFSTNFTDSEEAKKQINGYVEKGTQGKIVDAVKTLDKNTVFALVNYIFFKGKWEKPFEVEHTTEGDFHVDQATTVKVPMMNRLGRFDLLYCTTLASWVLQMDYLGNATAIFLLPDEGKLQHLEDTITKEILSKFLKNRHTRTVNLYFPKLSITGTYDLRSVLSTLGITKVFSNEADLSGVTEEAPLKLSKGVHKAVLTIDERGTEAAGVTVLEAIPMSLPPDVRFDRPFLIIIYEHYTKSPLFVGKVVNPTQ.

An N-terminal signal peptide occupies residues 1–24 (MPSSISWGLLLLAGLCCLAPGSLA). At Ser-33 the chain carries Phosphoserine. 4 N-linked (GlcNAc...) asparagine glycosylation sites follow: Asn-65, Asn-102, Asn-165, and Asn-266. An RCL region spans residues 368-387 (GVTVLEAIPMSLPPDVRFDR). The residue at position 378 (Ser-378) is a Phosphoserine.

It belongs to the serpin family. As to quaternary structure, interacts with CELA2A. Interacts with ERGIC3 and LMAN1/ERGIC53. Interacts with PRSS1/Trypsin. As to expression, plasma.

The protein resides in the secreted. In terms of biological role, inhibitor of serine proteases. The protein is Alpha-1-antiproteinase of Callosciurus caniceps (Gray-bellied squirrel).